Here is a 434-residue protein sequence, read N- to C-terminus: Methylenetetrahydrofolate--tRNA-(uracil-5-)-methyltransferase TrmFO (434 aa).

10-15 serves as a coordination point for FAD; it reads GAGLAG.

Belongs to the MnmG family. TrmFO subfamily. The cofactor is FAD.

The protein resides in the cytoplasm. The enzyme catalyses uridine(54) in tRNA + (6R)-5,10-methylene-5,6,7,8-tetrahydrofolate + NADH + H(+) = 5-methyluridine(54) in tRNA + (6S)-5,6,7,8-tetrahydrofolate + NAD(+). It catalyses the reaction uridine(54) in tRNA + (6R)-5,10-methylene-5,6,7,8-tetrahydrofolate + NADPH + H(+) = 5-methyluridine(54) in tRNA + (6S)-5,6,7,8-tetrahydrofolate + NADP(+). In terms of biological role, catalyzes the folate-dependent formation of 5-methyl-uridine at position 54 (M-5-U54) in all tRNAs. The protein is Methylenetetrahydrofolate--tRNA-(uracil-5-)-methyltransferase TrmFO of Bacillus cereus (strain ATCC 14579 / DSM 31 / CCUG 7414 / JCM 2152 / NBRC 15305 / NCIMB 9373 / NCTC 2599 / NRRL B-3711).